Here is a 153-residue protein sequence, read N- to C-terminus: Zinc finger protein GIS2 (153 aa).

CCHC-type zinc fingers lie at residues 4–21 (KACYVCGKIGHLAEDCDS), 23–40 (RLCYNCNKPGHVQTDCTM), 47–64 (KQCYNCGETGHVRSECTV), 65–82 (QRCFNCNQTGHISRECPE), 92–109 (VSCYKCGGPNHMAKDCMK), 116–133 (LKCYTCGQAGHMSRDCQN), and 135–152 (RLCYNCNETGHISKDCPK).

The protein resides in the cytoplasm. Functionally, may act in the sexual differentiation pathway. This Saccharomyces cerevisiae (strain ATCC 204508 / S288c) (Baker's yeast) protein is Zinc finger protein GIS2 (GIS2).